Reading from the N-terminus, the 380-residue chain is MTDYPIKYRLIKTEKHTGARLGEIITPHGTFPTPMFMPVGTQATVKTQSPEELKAIGSGIILSNTYHLWLRPGDELIARSGGLHKFMNWDQPILTDSGGFQVYSLADSRNITEEGVTFKNHLNGSKMFLSPEKAISIQNNLGSDIMMSFDECPQFYQPYDYVKKSIERTSRWAERGLKAHRRPHDQGLFGIVQGAGFEDLRRQSAADLVAMDFPGYSIGGLAVGESHEEMNAVLDFTTPLLPENKPRYLMGVGAPDSLIDGVIRGVDMFDCVLPTRIARNGTCMTSEGRLVVKNAKFAEDFTPLDHDCDCYTCQNYSRAYIRHLLKADETFGIRLTSYHNLYFLVNLMKKVRQAIMDDNLLEFRQDFLERYGYNKSNRNF.

The active-site Proton acceptor is aspartate 96. Substrate-binding positions include 96-100, aspartate 150, glutamine 193, and glycine 220; that span reads DSGGF. Residues 251–257 are RNA binding; that stretch reads GVGAPDS. Residue aspartate 270 is the Nucleophile of the active site. Residues 275–279 are RNA binding; important for wobble base 34 recognition; it reads TRIAR. Zn(2+) contacts are provided by cysteine 308, cysteine 310, cysteine 313, and histidine 339.

It belongs to the queuine tRNA-ribosyltransferase family. In terms of assembly, homodimer. Within each dimer, one monomer is responsible for RNA recognition and catalysis, while the other monomer binds to the replacement base PreQ1. Zn(2+) is required as a cofactor.

The catalysed reaction is 7-aminomethyl-7-carbaguanine + guanosine(34) in tRNA = 7-aminomethyl-7-carbaguanosine(34) in tRNA + guanine. It functions in the pathway tRNA modification; tRNA-queuosine biosynthesis. Functionally, catalyzes the base-exchange of a guanine (G) residue with the queuine precursor 7-aminomethyl-7-deazaguanine (PreQ1) at position 34 (anticodon wobble position) in tRNAs with GU(N) anticodons (tRNA-Asp, -Asn, -His and -Tyr). Catalysis occurs through a double-displacement mechanism. The nucleophile active site attacks the C1' of nucleotide 34 to detach the guanine base from the RNA, forming a covalent enzyme-RNA intermediate. The proton acceptor active site deprotonates the incoming PreQ1, allowing a nucleophilic attack on the C1' of the ribose to form the product. After dissociation, two additional enzymatic reactions on the tRNA convert PreQ1 to queuine (Q), resulting in the hypermodified nucleoside queuosine (7-(((4,5-cis-dihydroxy-2-cyclopenten-1-yl)amino)methyl)-7-deazaguanosine). The sequence is that of Queuine tRNA-ribosyltransferase from Streptococcus pyogenes serotype M49 (strain NZ131).